The primary structure comprises 423 residues: Glutamyl-tRNA(Gln) amidotransferase subunit A (423 aa).

Residues lysine 28 and serine 103 each act as charge relay system in the active site. Serine 127 (acyl-ester intermediate) is an active-site residue.

This sequence belongs to the amidase family. GatA subfamily. In terms of assembly, heterotrimer of A, B and C subunits.

It carries out the reaction L-glutamyl-tRNA(Gln) + L-glutamine + ATP + H2O = L-glutaminyl-tRNA(Gln) + L-glutamate + ADP + phosphate + H(+). Functionally, allows the formation of correctly charged Gln-tRNA(Gln) through the transamidation of misacylated Glu-tRNA(Gln) in organisms which lack glutaminyl-tRNA synthetase. The reaction takes place in the presence of glutamine and ATP through an activated gamma-phospho-Glu-tRNA(Gln). This Halobacterium salinarum (strain ATCC 700922 / JCM 11081 / NRC-1) (Halobacterium halobium) protein is Glutamyl-tRNA(Gln) amidotransferase subunit A.